The following is a 134-amino-acid chain: Methylglyoxal synthase (134 aa).

The 134-residue stretch at 1-134 (MHIALIAHDE…DWRDLRRNDE (134 aa)) folds into the MGS-like domain. Substrate-binding positions include His8, Lys12, 34-37 (TGTT), and 54-55 (SG). Catalysis depends on Asp60, which acts as the Proton donor/acceptor. His87 contributes to the substrate binding site.

The protein belongs to the methylglyoxal synthase family.

It catalyses the reaction dihydroxyacetone phosphate = methylglyoxal + phosphate. In terms of biological role, catalyzes the formation of methylglyoxal from dihydroxyacetone phosphate. This is Methylglyoxal synthase from Listeria welshimeri serovar 6b (strain ATCC 35897 / DSM 20650 / CCUG 15529 / CIP 8149 / NCTC 11857 / SLCC 5334 / V8).